Consider the following 467-residue polypeptide: UDP-N-acetylmuramoylalanine--D-glutamate ligase (467 aa).

Position 121-127 (121-127 (GTNGKST)) interacts with ATP.

Belongs to the MurCDEF family.

It localises to the cytoplasm. It catalyses the reaction UDP-N-acetyl-alpha-D-muramoyl-L-alanine + D-glutamate + ATP = UDP-N-acetyl-alpha-D-muramoyl-L-alanyl-D-glutamate + ADP + phosphate + H(+). It functions in the pathway cell wall biogenesis; peptidoglycan biosynthesis. In terms of biological role, cell wall formation. Catalyzes the addition of glutamate to the nucleotide precursor UDP-N-acetylmuramoyl-L-alanine (UMA). The polypeptide is UDP-N-acetylmuramoylalanine--D-glutamate ligase (Chelativorans sp. (strain BNC1)).